A 335-amino-acid chain; its full sequence is Cobalt-precorrin-5B C(1)-methyltransferase (335 aa).

The protein belongs to the CbiD family.

The enzyme catalyses Co-precorrin-5B + S-adenosyl-L-methionine = Co-precorrin-6A + S-adenosyl-L-homocysteine. It participates in cofactor biosynthesis; adenosylcobalamin biosynthesis; cob(II)yrinate a,c-diamide from sirohydrochlorin (anaerobic route): step 6/10. Catalyzes the methylation of C-1 in cobalt-precorrin-5B to form cobalt-precorrin-6A. This Methanospirillum hungatei JF-1 (strain ATCC 27890 / DSM 864 / NBRC 100397 / JF-1) protein is Cobalt-precorrin-5B C(1)-methyltransferase.